A 586-amino-acid polypeptide reads, in one-letter code: MSWLFGIKGSKGEGTGPPLPLPPVQPGGEGSGDGGAGDRPGPKDKWSNFDPTGLERAAKAARELEHSRHAKEALSLAQMQEQTLQLEHQAKLKEYEAAVEQLKGDQIRVQAEERRKTLSEETRQHQARAQYQDKLARQRYEDQLKQQQLLNEENLRKQEESVQKQEALRRATVEREMELRHKNEMLRVEAEARARAKAERENADIIREQIRLKAAEHRQTILESIRTAGTLFGEGFRAFVTDWDKVTATVAGLTLLAVGIYSAKNATSVAGRYIEARLGKPSLVRETSRITVLEALRHPIQVSRRLLSKPQDALEGVVLSPSLEARVRDIAIATRNTKKNKSLYRNVLMYGPPGTGKTLFAKKLALHSGMDYAIMTGGDVAPMGRDGVTAMHKVFDWASTSRRGLLLFVDEADAFLRKRATEKISEDLRATLNAFLHRTGQHSSKFMLVLASNQPEQFDWAINDRIDEMVSFELPQREERERLVRMYFDKYVLKPATEGKQRLKLAQFDYGKKCSEIAQLTEGMSGREISQLAVAWQAMAYASEDGVLTEAMMDARVQDAIQQHRQKMQWLKAEGSQPPTLRTQAE.

The segment at 1–52 (MSWLFGIKGSKGEGTGPPLPLPPVQPGGEGSGDGGAGDRPGPKDKWSNFDPT) is disordered. An N-acetylserine modification is found at Ser2. Positions 2-49 (SWLFGIKGSKGEGTGPPLPLPPVQPGGEGSGDGGAGDRPGPKDKWSNF) are required for interaction with the inner surface of the mitochondrial outer membrane. The Mitochondrial intermembrane portion of the chain corresponds to 2–245 (SWLFGIKGSK…FRAFVTDWDK (244 aa)). Residues 27–38 (GGEGSGDGGAGD) are compositionally biased toward gly residues. Residues 55-218 (ERAAKAAREL…QIRLKAAEHR (164 aa)) adopt a coiled-coil conformation. The helical transmembrane segment at 246 to 262 (VTATVAGLTLLAVGIYS) threads the bilayer. Topologically, residues 263-586 (AKNATSVAGR…QPPTLRTQAE (324 aa)) are mitochondrial matrix. Positions 289-304 (RITVLEALRHPIQVSR) are S100B-binding. 351–358 (GPPGTGKT) serves as a coordination point for ATP. Position 490 is an N6-acetyllysine; alternate (Lys490). Lys490 carries the N6-succinyllysine; alternate modification. Residues Lys494 and Lys512 each carry the N6-acetyllysine modification.

Belongs to the AAA ATPase family. As to quaternary structure, can form homooligomers. Homodimer formation at the N-terminus may be regulated by ATP and is required for the interaction with the inner surface of the mitochondrial outer membrane and correct mitochondrial homeostasis. Interacts with components of the mitochondrial ribosome and with other proteins involved in mitochondrial RNA metabolism. May also interact with protein involved in lipid metabolism, including STARD9. May interact with FAM210A. Interacts with GADD45GIP1. Interacts with S100B in a Ca(+2)- and Zn(+2)-dependent manner; this interaction probably occurs in the cytosol prior to mitochondrial targeting. S100B could assist ATAD3A cytoplasmic processing, preventing aggregation and favoring mitochondrial localization. Interacts with HSP60/HSPD1. Forms heterooligomers with ATAD3B; this interaction may affect ATAD3A activity. Interacts with CLPB.

It localises to the mitochondrion inner membrane. The protein localises to the mitochondrion matrix. It is found in the mitochondrion nucleoid. Essential for mitochondrial network organization, mitochondrial metabolism and cell growth at organism and cellular level. May play an important role in mitochondrial protein synthesis. May also participate in mitochondrial DNA replication. May bind to mitochondrial DNA D-loops and contribute to nucleoid stability. Required for enhanced channeling of cholesterol for hormone-dependent steroidogenesis. Involved in mitochondrial-mediated antiviral innate immunity. Also involved in the mitochondrial DNA damage response by promoting signaling between damaged genomes and the mitochondrial membrane, leading to activation of the integrated stress response (ISR). The polypeptide is ATPase family AAA domain-containing protein 3 (ATAD3) (Bos taurus (Bovine)).